Here is a 267-residue protein sequence, read N- to C-terminus: Undecaprenyl-diphosphatase (267 aa).

Transmembrane regions (helical) follow at residues 1–21 (MSYFEAFMLALVQGFTEFLPI), 39–59 (QGLAFDVAVHVGTLAAVVIYF), 83–103 (AKLAWMIILATIPACIFGLLM), 111–131 (LRSAWVIATTTIIFGLLLWWV), 144–164 (AGWKKALFIGLAQAMAIIPGT), 189–209 (FLMSIPIITLAGGYLGLKLVT), 218–238 (TLLTGIVVSFISAYICIHFFL), and 246–266 (MTPFVIYRLILGFGLFAFLMM).

This sequence belongs to the UppP family.

It localises to the cell inner membrane. It carries out the reaction di-trans,octa-cis-undecaprenyl diphosphate + H2O = di-trans,octa-cis-undecaprenyl phosphate + phosphate + H(+). Its function is as follows. Catalyzes the dephosphorylation of undecaprenyl diphosphate (UPP). Confers resistance to bacitracin. This is Undecaprenyl-diphosphatase from Vibrio atlanticus (strain LGP32) (Vibrio splendidus (strain Mel32)).